The primary structure comprises 284 residues: Bifunctional protein FolD (284 aa).

NADP(+)-binding positions include 166-168 (GAS) and Ile-232.

The protein belongs to the tetrahydrofolate dehydrogenase/cyclohydrolase family. Homodimer.

The enzyme catalyses (6R)-5,10-methylene-5,6,7,8-tetrahydrofolate + NADP(+) = (6R)-5,10-methenyltetrahydrofolate + NADPH. It catalyses the reaction (6R)-5,10-methenyltetrahydrofolate + H2O = (6R)-10-formyltetrahydrofolate + H(+). It functions in the pathway one-carbon metabolism; tetrahydrofolate interconversion. In terms of biological role, catalyzes the oxidation of 5,10-methylenetetrahydrofolate to 5,10-methenyltetrahydrofolate and then the hydrolysis of 5,10-methenyltetrahydrofolate to 10-formyltetrahydrofolate. The protein is Bifunctional protein FolD of Pseudomonas putida (strain W619).